We begin with the raw amino-acid sequence, 200 residues long: Inner membrane-spanning protein YciB (200 aa).

Transmembrane regions (helical) follow at residues 1-21 (MPPL…FFAN), 37-57 (IGAP…IALA), 66-86 (LPIM…LTLW), 103-123 (LFGG…GYVF), 136-156 (KLTL…EIVW), and 167-187 (FKVW…MPLI).

Belongs to the YciB family.

It is found in the cell inner membrane. Its function is as follows. Plays a role in cell envelope biogenesis, maintenance of cell envelope integrity and membrane homeostasis. This Brucella suis biovar 1 (strain 1330) protein is Inner membrane-spanning protein YciB.